A 326-amino-acid chain; its full sequence is Beta-ketoacyl-[acyl-carrier-protein] synthase III (326 aa).

Catalysis depends on residues Cys112 and His251. Residues 252-256 (QANSR) are ACP-binding. Asn281 is an active-site residue.

This sequence belongs to the thiolase-like superfamily. FabH family. Homodimer.

It is found in the cytoplasm. It catalyses the reaction malonyl-[ACP] + acetyl-CoA + H(+) = 3-oxobutanoyl-[ACP] + CO2 + CoA. It functions in the pathway lipid metabolism; fatty acid biosynthesis. Its function is as follows. Catalyzes the condensation reaction of fatty acid synthesis by the addition to an acyl acceptor of two carbons from malonyl-ACP. Catalyzes the first condensation reaction which initiates fatty acid synthesis and may therefore play a role in governing the total rate of fatty acid production. Possesses both acetoacetyl-ACP synthase and acetyl transacylase activities. Its substrate specificity determines the biosynthesis of branched-chain and/or straight-chain of fatty acids. This Clostridium botulinum (strain Langeland / NCTC 10281 / Type F) protein is Beta-ketoacyl-[acyl-carrier-protein] synthase III.